The chain runs to 837 residues: Histone acetyltransferase KAT2A (837 aa).

Residues 1–99 are disordered; that stretch reads MAEPSQAPTP…RKAQVRGLPR (99 aa). Position 2 is an N-acetylalanine (Ala2). A compositionally biased stretch (pro residues) spans 7–51; sequence APTPAPAAQPRPLQSPAPAPTPTPAPSPASAPIPTPTPAPAPAPA. Gly residues predominate over residues 58–74; the sequence is TGTGGPGVGSGGAGSGG. A compositionally biased stretch (low complexity) spans 75-87; it reads DPARPGLSQQQRA. Basic residues predominate over residues 88 to 99; it reads SQRKAQVRGLPR. Position 307 is a phosphoserine (Ser307). The segment at 407–434 is disordered; it reads FSPSMGGGSNSSLSLDSAGAEPMPGEKR. A compositionally biased stretch (low complexity) spans 416 to 425; the sequence is NSSLSLDSAG. Residues 503–656 form the N-acetyltransferase domain; that stretch reads VIGNSLTPKA…GATLMECELN (154 aa). N6-acetyllysine is present on Lys549. Residue Glu575 is the Proton donor/acceptor of the active site. Acetyl-CoA-binding positions include 579 to 581, 586 to 592, and Tyr617; these read CAV and QVKGYGT. Residues 579–581, 586–592, and Tyr617 each bind succinyl-CoA; these read CAV and QVKGYGT. Residues 639–648 form a loop 3 region; it reads LGYIKDYEGA. A Glycyl lysine isopeptide (Lys-Gly) (interchain with G-Cter in SUMO2) cross-link involves residue Lys728. The 105-residue stretch at 728–832 folds into the Bromo domain; it reads KDPDQLYTTL…KFFYFKLKEG (105 aa). Thr735 is subject to Phosphothreonine. Residues Lys759 and Lys791 each participate in a glycyl lysine isopeptide (Lys-Gly) (interchain with G-Cter in SUMO2) cross-link.

This sequence belongs to the acetyltransferase family. GCN5 subfamily. In terms of assembly, homooligomer; may form a tetramer of homodimers. Interacts with EP300, CREBBP and ADA2. Component of the TFTC-HAT complex, at least composed of TAF5L, TAF6L, TAF3, TADA3L, SUPT3H/SPT3, TAF2/TAFII150, TAF4/TAFII135, TAF5/TAFII100, KAT2A/GCN5L2, TAF10 and TRRAP. Component of the STAGA transcription coactivator-HAT complex, at least composed of SUPT3H, KAT2A, SUPT7L, TAF5L, TAF6L, TADA3L, TAD1L, TAF10, TAF12, TRRAP and TAF9. The STAGA core complex is associated with a subcomplex required for histone deubiquitination composed of ATXN7L3, ENY2 and USP22. Component of the ADA2A-containing complex (ATAC), composed of KAT14, KAT2A, TADA2L, TADA3L, ZZ3, MBIP, WDR5, YEATS2, CCDC101 and DR1. In the complex, it probably interacts directly with KAT14, MBIP and WDR5. Interacts with PML. Interacts with CEBPB. Interacts with TACC1, TACC2 and TACC3. Interacts with RELA. Interacts with NFATC2. Interacts with TBX5. Interacts with PLK4. Associates with the 2-oxoglutarate dehydrogenase complex. Interacts with XPC; leading to KAT2A recruitment to promoters and subsequent acetylation of histones. Interacts with ERCC3/XPB; leading to KAT2A recruitment to promoters and subsequent acetylation of histones. Interacts with ISL1. Interactions of ISL1 with MLIP1 or KAT2A may be mutually exclusive. (Microbial infection) Interacts with and acetylates HIV-1 Tat. Post-translationally, acetylated at Lys-549, inhibiting the protein acetyltransferase activity. Deacetylation at Lys-549 by SIRT6 promotes phosphorylation at Ser-307 and Thr-735 and subsequent activation of the protein acetyltransferase activity, leading to acetylation and inactivation of PPARGC1A. In terms of tissue distribution, expressed in all tissues tested.

It localises to the nucleus. The protein localises to the chromosome. The protein resides in the cytoplasm. It is found in the cytoskeleton. Its subcellular location is the microtubule organizing center. It localises to the centrosome. The enzyme catalyses L-lysyl-[histone] + acetyl-CoA = N(6)-acetyl-L-lysyl-[histone] + CoA + H(+). The catalysed reaction is L-lysyl-[protein] + acetyl-CoA = N(6)-acetyl-L-lysyl-[protein] + CoA + H(+). It carries out the reaction succinyl-CoA + L-lysyl-[protein] = N(6)-succinyl-L-lysyl-[protein] + CoA + H(+). It catalyses the reaction glutaryl-CoA + L-lysyl-[protein] = N(6)-glutaryl-L-lysyl-[protein] + CoA + H(+). Its function is as follows. Protein lysine acyltransferase that can act as a acetyltransferase, glutaryltransferase, succinyltransferase or malonyltransferase, depending on the context. Acts as a histone lysine succinyltransferase: catalyzes succinylation of histone H3 on 'Lys-79' (H3K79succ), with a maximum frequency around the transcription start sites of genes. Succinylation of histones gives a specific tag for epigenetic transcription activation. Association with the 2-oxoglutarate dehydrogenase complex, which provides succinyl-CoA, is required for histone succinylation. In different complexes, functions either as an acetyltransferase (HAT) or as a succinyltransferase: in the SAGA and ATAC complexes, acts as a histone acetyltransferase. Has significant histone acetyltransferase activity with core histones, but not with nucleosome core particles. Has a a strong preference for acetylation of H3 at 'Lys-9' (H3K9ac). Acetylation of histones gives a specific tag for epigenetic transcription activation. Recruited by the XPC complex at promoters, where it specifically mediates acetylation of histone variant H2A.Z.1/H2A.Z, thereby promoting expression of target genes. Involved in long-term memory consolidation and synaptic plasticity: acts by promoting expression of a hippocampal gene expression network linked to neuroactive receptor signaling. Acts as a positive regulator of T-cell activation: upon TCR stimulation, recruited to the IL2 promoter following interaction with NFATC2 and catalyzes acetylation of histone H3 at 'Lys-9' (H3K9ac), leading to promote IL2 expression. Required for growth and differentiation of craniofacial cartilage and bone by regulating acetylation of histone H3 at 'Lys-9' (H3K9ac). Regulates embryonic stem cell (ESC) pluripotency and differentiation. Also acetylates non-histone proteins, such as CEBPB, MRE11, PPARGC1A, PLK4 and TBX5. Involved in heart and limb development by mediating acetylation of TBX5, acetylation regulating nucleocytoplasmic shuttling of TBX5. Acts as a negative regulator of centrosome amplification by mediating acetylation of PLK4. Acts as a negative regulator of gluconeogenesis by mediating acetylation and subsequent inactivation of PPARGC1A. Also acts as a histone glutaryltransferase: catalyzes glutarylation of histone H4 on 'Lys-91' (H4K91glu), a mark that destabilizes nucleosomes by promoting dissociation of the H2A-H2B dimers from nucleosomes. Functionally, (Microbial infection) In case of HIV-1 infection, it is recruited by the viral protein Tat. Regulates Tat's transactivating activity and may help inducing chromatin remodeling of proviral genes. The polypeptide is Histone acetyltransferase KAT2A (Homo sapiens (Human)).